Here is a 568-residue protein sequence, read N- to C-terminus: Calcium-dependent protein kinase 5 (568 aa).

Residues 125 to 379 enclose the Protein kinase domain; sequence EIDRYKLGKG…VEQVLKHRWF (255 aa). ATP contacts are provided by residues 131–139 and Lys-154; that span reads LGKGSYGNV. Catalysis depends on Asp-245, which acts as the Proton acceptor. The J domain autoinhibitory motif motif lies at 400–408; that stretch reads KFKEFHKLC. Residues 400-435 are j domain; sequence KFKEFHKLCKIKKLAVTCIAYQLNEKDIGKLKKTFE. The J domain EF-hand interaction motif signature appears at 409 to 418; the sequence is KIKKLAVTCI. 4 EF-hand domains span residues 425–460, 462–495, 496–531, and 534–568; these read KDIG…NDNE, DREL…HSIF, QQDV…SAVQ, and FSKE…GVKE. Ca(2+) is bound by residues Asp-438, Asn-440, Asp-442, Glu-449, Asp-473, Asp-475, Asn-477, Glu-484, Asp-509, Asp-511, Asp-513, Glu-520, Asp-547, Asn-549, Asp-551, and Glu-558.

The protein belongs to the protein kinase superfamily. Ser/Thr protein kinase family. CDPK subfamily. It depends on Mg(2+) as a cofactor. In terms of processing, may be palmitoylated. Post-translationally, autophosphorylated in vitro.

The protein localises to the cytoplasm. Its subcellular location is the cytoplasmic vesicle. It is found in the secretory vesicle. It localises to the microneme membrane. The protein resides in the cell membrane. The enzyme catalyses L-seryl-[protein] + ATP = O-phospho-L-seryl-[protein] + ADP + H(+). It carries out the reaction L-threonyl-[protein] + ATP = O-phospho-L-threonyl-[protein] + ADP + H(+). With respect to regulation, activated by calcium. Upon calcium binding to the EF-hand domains, the C-terminus of the junction domain (J domain) undergoes a conformational change which results in the dissociation of the pseudo-substrate inhibitory motif from the catalytic domain. This, in turn, may facilitate the autophosphorylation of the activation loop at Thr-285, which leads to the kinase activation. In terms of biological role, calcium-dependent protein kinase which acts as a sensor and effector of intracellular Ca(2+) levels probably in part downstream of cGMP-activated PKG kinase. Plays a central role in host erythrocytes and hepatocytes infection cycles. During the liver stage, involved in sporozoite motility and thus in sporozoite invasion of host hepatocytes, probably together with CDPK1 and CDPK4. Involved in merosome egress from host hepatocytes, probably together with CDPK4. Required for the release of hepatic merozoites from merosomes in the host blood stream. During the asexual blood stage, required for merozoite egress from host erythrocytes by triggering microneme secretion. Phosphorylates transporter NPT1 at late schizont stage. This chain is Calcium-dependent protein kinase 5, found in Plasmodium falciparum (isolate 3D7).